We begin with the raw amino-acid sequence, 124 residues long: ATP synthase epsilon chain (124 aa).

Belongs to the ATPase epsilon chain family. As to quaternary structure, F-type ATPases have 2 components, CF(1) - the catalytic core - and CF(0) - the membrane proton channel. CF(1) has five subunits: alpha(3), beta(3), gamma(1), delta(1), epsilon(1). CF(0) has three main subunits: a, b and c.

Its subcellular location is the cell membrane. Functionally, produces ATP from ADP in the presence of a proton gradient across the membrane. The chain is ATP synthase epsilon chain from Streptomyces griseus subsp. griseus (strain JCM 4626 / CBS 651.72 / NBRC 13350 / KCC S-0626 / ISP 5235).